The primary structure comprises 227 residues: Phosphoribosylformylglycinamidine synthase subunit PurQ (227 aa).

One can recognise a Glutamine amidotransferase type-1 domain in the interval 2 to 227; the sequence is RWAIVRFPGA…FLGLVKEVAR (226 aa). Cys85 serves as the catalytic Nucleophile. Residues His200 and Glu202 contribute to the active site.

Part of the FGAM synthase complex composed of 1 PurL, 1 PurQ and 2 PurS subunits.

The protein localises to the cytoplasm. It catalyses the reaction N(2)-formyl-N(1)-(5-phospho-beta-D-ribosyl)glycinamide + L-glutamine + ATP + H2O = 2-formamido-N(1)-(5-O-phospho-beta-D-ribosyl)acetamidine + L-glutamate + ADP + phosphate + H(+). The enzyme catalyses L-glutamine + H2O = L-glutamate + NH4(+). It functions in the pathway purine metabolism; IMP biosynthesis via de novo pathway; 5-amino-1-(5-phospho-D-ribosyl)imidazole from N(2)-formyl-N(1)-(5-phospho-D-ribosyl)glycinamide: step 1/2. Its function is as follows. Part of the phosphoribosylformylglycinamidine synthase complex involved in the purines biosynthetic pathway. Catalyzes the ATP-dependent conversion of formylglycinamide ribonucleotide (FGAR) and glutamine to yield formylglycinamidine ribonucleotide (FGAM) and glutamate. The FGAM synthase complex is composed of three subunits. PurQ produces an ammonia molecule by converting glutamine to glutamate. PurL transfers the ammonia molecule to FGAR to form FGAM in an ATP-dependent manner. PurS interacts with PurQ and PurL and is thought to assist in the transfer of the ammonia molecule from PurQ to PurL. This Thermus thermophilus (strain ATCC 27634 / DSM 579 / HB8) protein is Phosphoribosylformylglycinamidine synthase subunit PurQ.